Consider the following 365-residue polypeptide: DNA replication and repair protein RecF (365 aa).

An ATP-binding site is contributed by 30-37 (GRNAQGKT).

Belongs to the RecF family.

Its subcellular location is the cytoplasm. Its function is as follows. The RecF protein is involved in DNA metabolism; it is required for DNA replication and normal SOS inducibility. RecF binds preferentially to single-stranded, linear DNA. It also seems to bind ATP. This Streptococcus pneumoniae (strain CGSP14) protein is DNA replication and repair protein RecF.